A 1272-amino-acid polypeptide reads, in one-letter code: Presporeless protein A (1272 aa).

A Nuclear localization signal motif is present at residues 146 to 161 (KDKRIKPIDPKKKISR). Disordered stretches follow at residues 369-403 (ASTI…DDTS) and 468-490 (STSS…NQLK). Acidic residues predominate over residues 374–392 (DGEEEDDDDDDNDVDGNDD). The segment covering 393–403 (DNNKEKVDDTS) has biased composition (basic and acidic residues). The span at 468-487 (STSSTNTASSTRSKASSNSN) shows a compositional bias: low complexity.

It localises to the nucleus. In terms of biological role, functions autonomously, very early in the prespore pathway, to control prespore cell differentiation, maybe at the level of transcription. Also required for proper aggregation. The chain is Presporeless protein A (pslA) from Dictyostelium discoideum (Social amoeba).